Consider the following 612-residue polypeptide: Glucoamylase (612 aa).

The first 19 residues, 1–19, serve as a signal peptide directing secretion; the sequence is MVSFSSCLRALALGSSVLA. A propeptide spanning residues 20-25 is cleaved from the precursor; that stretch reads VQPVLR. N39 is a glycosylation site (N-linked (GlcNAc...) asparagine). W146 lines the substrate pocket. The Proton acceptor role is filled by D202. E205 acts as the Proton donor in catalysis. Disulfide bonds link C236-C239, C248-C475, and C288-C296. The 107-residue stretch at 506 to 612 folds into the CBM20 domain; sequence CQVPTTVSVT…KSAVQSDVWR (107 aa).

It belongs to the glycosyl hydrolase 15 family.

It carries out the reaction Hydrolysis of terminal (1-&gt;4)-linked alpha-D-glucose residues successively from non-reducing ends of the chains with release of beta-D-glucose.. This is Glucoamylase (glaA) from Aspergillus oryzae (strain ATCC 42149 / RIB 40) (Yellow koji mold).